The chain runs to 215 residues: MPQTLADMRRDYSRSGLCEAEAPLEPFSLFHQWFAEAMKTEQLPVEPNAMSLATVDGNGRPHCRVLLLKGVDERGFTFFSNYESAKGQQLRARPFAAMTFFWPTLERQVRIEGEVEKVSSQESDAYFQVRPLGSRLGAWASPQSRVIRDRTELEELLALTEKRFLDQAPHCPGHWGGYRLLPDRIEFWQGRASRLHDRLNYRLEKGGWVRERLAP.

Substrate-binding positions include 9–12 (RRDY) and Lys-69. Residues 64–69 (RVLLLK), 79–80 (FS), Lys-86, and Gln-108 each bind FMN. Residues Tyr-126, Arg-130, and Ser-134 each coordinate substrate. Residues 143 to 144 (QS) and Trp-188 contribute to the FMN site. 194 to 196 (RLH) is a substrate binding site. Arg-198 lines the FMN pocket.

It belongs to the pyridoxamine 5'-phosphate oxidase family. In terms of assembly, homodimer. FMN serves as cofactor.

It catalyses the reaction pyridoxamine 5'-phosphate + O2 + H2O = pyridoxal 5'-phosphate + H2O2 + NH4(+). It carries out the reaction pyridoxine 5'-phosphate + O2 = pyridoxal 5'-phosphate + H2O2. Its pathway is cofactor metabolism; pyridoxal 5'-phosphate salvage; pyridoxal 5'-phosphate from pyridoxamine 5'-phosphate: step 1/1. It participates in cofactor metabolism; pyridoxal 5'-phosphate salvage; pyridoxal 5'-phosphate from pyridoxine 5'-phosphate: step 1/1. Functionally, catalyzes the oxidation of either pyridoxine 5'-phosphate (PNP) or pyridoxamine 5'-phosphate (PMP) into pyridoxal 5'-phosphate (PLP). In Azotobacter vinelandii (strain DJ / ATCC BAA-1303), this protein is Pyridoxine/pyridoxamine 5'-phosphate oxidase.